The chain runs to 583 residues: Selenocysteine-specific elongation factor (583 aa).

In terms of domain architecture, tr-type G spans 5 to 203 (RVNVNVGVLG…LLKSQISIPT (199 aa)). The tract at residues 14-21 (GHIDSGKT) is G1. Gly19, Thr21, and Ala22 together coordinate GTP. Residue Thr21 participates in Mg(2+) binding. The tract at residues 46-50 (GITLD) is G2. The Mg(2+) site is built by Thr48 and Asp78. The interval 78–81 (DCPG) is G3. A G4 region spans residues 132–135 (NKID). Residues Asp135 and Lys173 each coordinate GTP. Positions 171-173 (AAK) are G5. The interval 371–390 (MPTATEGDDEADPKAGHAPG) is disordered. Ser524 carries the post-translational modification Phosphoserine. The tract at residues 528–562 (KKILTPTLKKRSRAGRGETTKPEEGTERPEPIQPV) is disordered. Phosphothreonine is present on Thr532. Residues 534–540 (TLKKRSR) carry the Nuclear localization signal motif. Positions 542–557 (GRGETTKPEEGTERPE) are enriched in basic and acidic residues. Arg543 carries the post-translational modification Omega-N-methylarginine.

Belongs to the TRAFAC class translation factor GTPase superfamily. Classic translation factor GTPase family. SelB subfamily. Mg(2+) serves as cofactor. Requires Mn(2+) as cofactor.

The protein localises to the cytoplasm. It is found in the nucleus. The enzyme catalyses GTP + H2O = GDP + phosphate + H(+). Functionally, translation factor required for the incorporation of the rare amino acid selenocysteine encoded by UGA codons. Replaces the eRF1-eRF3-GTP ternary complex for the insertion of selenocysteine directed by the UGA codon. Insertion of selenocysteine at UGA codons is mediated by SECISBP2 and EEFSEC: SECISBP2 (1) specifically binds the SECIS sequence once the 80S ribosome encounters an in-frame UGA codon and (2) contacts the RPS27A/eS31 of the 40S ribosome before ribosome stalling. (3) GTP-bound EEFSEC then delivers selenocysteinyl-tRNA(Sec) to the 80S ribosome and adopts a preaccommodated state conformation. (4) After GTP hydrolysis, EEFSEC dissociates from the assembly, selenocysteinyl-tRNA(Sec) accommodates, and peptide bond synthesis and selenoprotein elongation occur. The chain is Selenocysteine-specific elongation factor (Eefsec) from Mus musculus (Mouse).